The sequence spans 203 residues: MSNESIKAEQDLIQEGVESEVSTEEASLIDELTQANFRIEELEQLLADALAKVEEQKDSVIRAAAEVDNIRRRAAMDVEKANKFALEKFANELLPVLDNMERALQGTNPQDETTKAIYEGVELTQKSFLTAVAKFGVKPIDPQGQAFNPDQHQAIGMQPSAEYPANTVMLVMQKGYELNSRLLRPAMVMVSQGGPSQEINIEA.

Residues 1 to 10 (MSNESIKAEQ) are compositionally biased toward basic and acidic residues. Residues 1-20 (MSNESIKAEQDLIQEGVESE) are disordered.

Belongs to the GrpE family. As to quaternary structure, homodimer.

It is found in the cytoplasm. Participates actively in the response to hyperosmotic and heat shock by preventing the aggregation of stress-denatured proteins, in association with DnaK and GrpE. It is the nucleotide exchange factor for DnaK and may function as a thermosensor. Unfolded proteins bind initially to DnaJ; upon interaction with the DnaJ-bound protein, DnaK hydrolyzes its bound ATP, resulting in the formation of a stable complex. GrpE releases ADP from DnaK; ATP binding to DnaK triggers the release of the substrate protein, thus completing the reaction cycle. Several rounds of ATP-dependent interactions between DnaJ, DnaK and GrpE are required for fully efficient folding. The protein is Protein GrpE of Shewanella sp. (strain MR-7).